The sequence spans 695 residues: Nucleoprotein (695 aa).

2 coiled-coil regions span residues 316–341 and 372–399; these read VNVG…RRHE and QTLA…VEDQ. 2 disordered regions span residues 424–458 and 483–615; these read QARP…SFVD and TSRE…AREA. Residues 438–447 show a composition bias toward basic and acidic residues; it reads VDDKIEHEST. Composition is skewed to polar residues over residues 494–505 and 537–552; these read PGQSQDLDNSQG and TTDS…SDNE. Residues 603-606 carry the PTAP/PSAP motif motif; that stretch reads PSAP.

The protein belongs to the filoviruses nucleoprotein family. As to quaternary structure, homooligomer. Homomultimerizes to form the nucleocapsid. Binds to viral genomic RNA. Interacts with VP35 and VP30 to form the nucleocapsid. Also interacts with VP24 and VP40. Phosphorylated.

The protein resides in the virion. It is found in the host cytoplasm. In terms of biological role, encapsidates the genome, protecting it from nucleases. The encapsidated genomic RNA is termed the nucleocapsid and serves as template for transcription and replication. During replication, encapsidation by NP is coupled to RNA synthesis and all replicative products are resistant to nucleases. The polypeptide is Nucleoprotein (NP) (Lake Victoria marburgvirus (strain Ozolin-75) (MARV)).